The sequence spans 476 residues: UDP-N-acetylmuramate--L-alanine ligase (476 aa).

121 to 127 (GAHGKTT) serves as a coordination point for ATP.

Belongs to the MurCDEF family.

The protein resides in the cytoplasm. It catalyses the reaction UDP-N-acetyl-alpha-D-muramate + L-alanine + ATP = UDP-N-acetyl-alpha-D-muramoyl-L-alanine + ADP + phosphate + H(+). It participates in cell wall biogenesis; peptidoglycan biosynthesis. Cell wall formation. The protein is UDP-N-acetylmuramate--L-alanine ligase of Clavibacter michiganensis subsp. michiganensis (strain NCPPB 382).